Reading from the N-terminus, the 868-residue chain is Rifampicin phosphotransferase (868 aa).

The ATP-binding stretch occupies residues 5-317 (TERYVLDLQE…FHIVQSRPIT (313 aa)). Positions 26, 120, 135, 139, 186, 300, 312, and 314 each coordinate ATP. The interval 330-755 (NHVYVSVGHQ…TSDGEALTGA (426 aa)) is rifampicin-binding. The tract at residues 410–430 (FVPSLPDAPPAGPRAGAAPEP) is disordered. The interval 768-866 (GLPVSTGTVE…VHGTDGYIEI (99 aa)) is swivel phosphohistidine. His826 serves as the catalytic Tele-phosphohistidine intermediate.

It belongs to the rifampicin phosphotransferase family.

It catalyses the reaction rifampicin + ATP + H2O = 21-phosphorifampicin + AMP + phosphate + 2 H(+). Its function is as follows. Catalyzes the phosphorylation of rifampicin, also known as rifampin (RIF), leading to its inactivation. Confers high level resistance to a variety of clinically used rifamycin antibiotics. Does not show phosphoenolpyruvate (PEP) synthase activity. This Streptomyces sviceus (strain ATCC 29083 / DSM 924 / JCM 4929 / NBRC 13980 / NCIMB 11184 / NRRL 5439 / UC 5370) protein is Rifampicin phosphotransferase.